The following is a 500-amino-acid chain: L-2-amino-4-chloropent-4-enoate dechlorinase/desaturase (500 aa).

Lys311 bears the N6-(pyridoxal phosphate)lysine mark.

It belongs to the trans-sulfuration enzymes family. Requires pyridoxal 5'-phosphate as cofactor.

It catalyses the reaction L-2-amino-4-chloropent-4-enoate = L-propargylglycine + chloride + H(+). The protein operates within amino-acid metabolism. It functions in the pathway antibiotic biosynthesis. In terms of biological role, involved in the biosynthesis of terminal alkyne-containing amino acids such as L-propargylglycine (Pra) and L-beta-ethynylserine, that are produced as antibiotics by S.cattleya. Catalyzes gamma-elimination of chloride from 4-chloro-allyl-L-glycine (also named L-2-amino-4-chloropent-4-enoate), followed by an isomerization, to form the terminal-alkyne product L-propargylglycine. The protein is L-2-amino-4-chloropent-4-enoate dechlorinase/desaturase of Streptantibioticus cattleyicolor (strain ATCC 35852 / DSM 46488 / JCM 4925 / NBRC 14057 / NRRL 8057) (Streptomyces cattleya).